The chain runs to 418 residues: F-box protein At1g10780 (418 aa).

The region spanning 1-47 is the F-box domain; sequence MDSLPDAILQYILSYLTSARDVAACNCVSKRWKESTDSVKSVVFHRN.

This chain is F-box protein At1g10780, found in Arabidopsis thaliana (Mouse-ear cress).